The primary structure comprises 95 residues: Small ribosomal subunit protein uS14 (95 aa).

It belongs to the universal ribosomal protein uS14 family. In terms of assembly, part of the 30S ribosomal subunit. Contacts proteins S3 and S10.

In terms of biological role, binds 16S rRNA, required for the assembly of 30S particles and may also be responsible for determining the conformation of the 16S rRNA at the A site. The protein is Small ribosomal subunit protein uS14 (rpsN) of Carsonella ruddii.